Reading from the N-terminus, the 263-residue chain is Probable ABC transporter permease protein ycf63 (263 aa).

5 consecutive transmembrane segments (helical) span residues 43 to 63 (IVGP…SMVF), 70 to 89 (EFLY…IAFT), 150 to 170 (ILSI…AFVM), 188 to 208 (ISDF…IGFI), and 230 to 250 (SVVT…YFMF).

It belongs to the MlaE permease family.

Its subcellular location is the plastid. The protein localises to the chloroplast membrane. Could be part of an ABC transporter complex. The sequence is that of Probable ABC transporter permease protein ycf63 (ycf63) from Pyropia yezoensis (Susabi-nori).